We begin with the raw amino-acid sequence, 148 residues long: Large ribosomal subunit protein uL15 (148 aa).

Positions M1 to K46 are disordered. The span at T31–G45 shows a compositional bias: basic residues.

It belongs to the universal ribosomal protein uL15 family. In terms of assembly, part of the 50S ribosomal subunit.

Functionally, binds to the 23S rRNA. In Fervidobacterium nodosum (strain ATCC 35602 / DSM 5306 / Rt17-B1), this protein is Large ribosomal subunit protein uL15.